Reading from the N-terminus, the 435-residue chain is MKTTYVNATIVTMNEQNEVIENGYIIVENDKIIDVNSGEFASDFEVDEVIDMKGKWVLPGLVNTHTHVVMSLLRGIGDDMLLQPWLETRIWPLESQFTPELAVASTELGLLEMVKSGTTSFSDMFNPIGVDQDAIMETVSRSGMRAAVSRTLFSFGTQEDEKKAIEEAEKYVKRYYNESGMLTTMVAPHSPYTCSTELLEECARIAVENQTMVHIHLSETEREVRDIEAQYGKRPVEYVASCGLFKRPTVIAHGVVLNDNERAFLAEHDVRVAHNPNSNLKLGSGIANVKAMLEAGMKVGIATDSVASNNNLDMFEEMRIATLLQKGIHQDATALPVETALTLATKGAAEVIGMKQTGSLEVGKCADFITIDPSNKPHLQPADEVLSHLVYAASGKDISDVIINGKRVVWNGECKTLDEERIIFEASRYKRGLQR.

Positions 65 and 67 each coordinate Zn(2+). Positions 94, 150, and 189 each coordinate substrate. His216 lines the Zn(2+) pocket. Substrate contacts are provided by Glu219 and Asp304. A Zn(2+)-binding site is contributed by Asp304.

It belongs to the metallo-dependent hydrolases superfamily. MTA/SAH deaminase family. Requires Zn(2+) as cofactor.

The catalysed reaction is S-adenosyl-L-homocysteine + H2O + H(+) = S-inosyl-L-homocysteine + NH4(+). It catalyses the reaction S-methyl-5'-thioadenosine + H2O + H(+) = S-methyl-5'-thioinosine + NH4(+). In terms of biological role, catalyzes the deamination of 5-methylthioadenosine and S-adenosyl-L-homocysteine into 5-methylthioinosine and S-inosyl-L-homocysteine, respectively. Is also able to deaminate adenosine. The sequence is that of 5-methylthioadenosine/S-adenosylhomocysteine deaminase from Bacillus anthracis (strain A0248).